The sequence spans 598 residues: MRLSQMLFVTLREDPAEAEIPSHKLLLRAGYIRRIGSGIYAYLPLMWRVLQKVSQIVREEMNAAGAQECLLPQLQPAELWRESGRWETYTKAEGIMFSLIDRRDTELGLGPTHEEVITTIAKEMIRSYRQLPVNLYQIQSKFRDEIRPRFGLMRGREFIMKDAYSFHASEDSLKETYQAMDQAYRNMITRCGLEFRAVQADSGAIGGSASQEFMILAEAGEDEVLYTEDGKYAANVEKAVSLPPDAELSPFTTPEKRETPNTNTIEKLCQFLQCSATAIVKNVLYQAVYDNGKTVLVLVSIRGDQDVNDVKLTNELVRLAPQYQATTLLALQVPDETAQAKWAAKPLPLGYIAPNLEDNYISSIPDITPKFLRLVDKTAVELKNFITGANESGYHQVGANWGQEFVLPSLVVDVRKAMAGDRAVHDPIQTLQTARGIEVGHIFQLGVKYSQAMGATFTNEQGEEKPLIMGCYGVGVSRLAQAAVEQSYDKDGIIWPVAIAPYHAVVVIPNINDAQQVEVAEKLYTELNKVGVETLLDDRDERAGVKFKDAELIGIPYRIVTGRSLQSGKVELVERSTKNSQEIAIDQVVETLKKLINV.

Belongs to the class-II aminoacyl-tRNA synthetase family. ProS type 1 subfamily. In terms of assembly, homodimer.

The protein resides in the cytoplasm. The enzyme catalyses tRNA(Pro) + L-proline + ATP = L-prolyl-tRNA(Pro) + AMP + diphosphate. In terms of biological role, catalyzes the attachment of proline to tRNA(Pro) in a two-step reaction: proline is first activated by ATP to form Pro-AMP and then transferred to the acceptor end of tRNA(Pro). As ProRS can inadvertently accommodate and process non-cognate amino acids such as alanine and cysteine, to avoid such errors it has two additional distinct editing activities against alanine. One activity is designated as 'pretransfer' editing and involves the tRNA(Pro)-independent hydrolysis of activated Ala-AMP. The other activity is designated 'posttransfer' editing and involves deacylation of mischarged Ala-tRNA(Pro). The misacylated Cys-tRNA(Pro) is not edited by ProRS. The chain is Proline--tRNA ligase from Rippkaea orientalis (strain PCC 8801 / RF-1) (Cyanothece sp. (strain PCC 8801)).